The chain runs to 47 residues: Large ribosomal subunit protein eL40 (47 aa).

This sequence belongs to the eukaryotic ribosomal protein eL40 family.

The sequence is that of Large ribosomal subunit protein eL40 from Methanocaldococcus jannaschii (strain ATCC 43067 / DSM 2661 / JAL-1 / JCM 10045 / NBRC 100440) (Methanococcus jannaschii).